A 159-amino-acid polypeptide reads, in one-letter code: Lipoprotein LpqH (159 aa).

The N-terminal stretch at Met-1–Gly-21 is a signal peptide. Cys-22 is lipidated: N-palmitoyl cysteine. The S-diacylglycerol cysteine moiety is linked to residue Cys-22. The disordered stretch occupies residues Ser-24–Lys-51. Positions Ser-27–Gly-49 are enriched in low complexity.

Belongs to the mycobacterial 19 kDa antigen family. Modified by Lgt on Cys-22 with an S-linked diacylglycerol with a mixture of C16, C18 and C19 fatty acids, signal peptide is removed by LspA, modifed by Lnt with an amide-linked mixture of C16 and C19 fatty acids.

Its subcellular location is the cell membrane. Its function is as follows. Might be involved in ligand transport. A host TLR2 agonist, modifies host gene expression in response to pathogen. In Mycobacterium tuberculosis (strain CDC 1551 / Oshkosh), this protein is Lipoprotein LpqH (lpqH).